An 837-amino-acid chain; its full sequence is Protein translocase subunit SecA (837 aa).

Residues glutamine 85, glycine 103–threonine 107, and aspartate 493 contribute to the ATP site. Zn(2+) is bound by residues cysteine 821, cysteine 823, cysteine 832, and histidine 833.

Belongs to the SecA family. As to quaternary structure, monomer and homodimer. Part of the essential Sec protein translocation apparatus which comprises SecA, SecYEG and auxiliary proteins SecDF. Other proteins may also be involved. It depends on Zn(2+) as a cofactor.

The protein localises to the cell membrane. It is found in the cytoplasm. It catalyses the reaction ATP + H2O + cellular proteinSide 1 = ADP + phosphate + cellular proteinSide 2.. Part of the Sec protein translocase complex. Interacts with the SecYEG preprotein conducting channel. Has a central role in coupling the hydrolysis of ATP to the transfer of proteins into and across the cell membrane, serving as an ATP-driven molecular motor driving the stepwise translocation of polypeptide chains across the membrane. In Streptococcus pneumoniae (strain Taiwan19F-14), this protein is Protein translocase subunit SecA.